The chain runs to 103 residues: Large ribosomal subunit protein bL21 (103 aa).

Belongs to the bacterial ribosomal protein bL21 family. Part of the 50S ribosomal subunit. Contacts protein L20.

This protein binds to 23S rRNA in the presence of protein L20. This Haemophilus influenzae (strain 86-028NP) protein is Large ribosomal subunit protein bL21.